A 215-amino-acid chain; its full sequence is Probable phosphoglycerate mutase GpmB (215 aa).

Residues 8 to 15 (RHGETQWN), 21 to 22 (QG), arginine 58, lysine 60, 82 to 85 (ELDM), 104 to 105 (RR), and 151 to 152 (GI) contribute to the substrate site. Histidine 9 (tele-phosphohistidine intermediate) is an active-site residue. Glutamate 82 serves as the catalytic Proton donor/acceptor.

It belongs to the phosphoglycerate mutase family. GpmB subfamily.

It carries out the reaction (2R)-2-phosphoglycerate = (2R)-3-phosphoglycerate. The protein operates within carbohydrate degradation; glycolysis; pyruvate from D-glyceraldehyde 3-phosphate: step 3/5. This is Probable phosphoglycerate mutase GpmB from Salmonella agona (strain SL483).